The following is a 145-amino-acid chain: D-aminoacyl-tRNA deacylase (145 aa).

The Gly-cisPro motif, important for rejection of L-amino acids motif lies at 137 to 138; that stretch reads GP.

The protein belongs to the DTD family. In terms of assembly, homodimer.

The protein resides in the cytoplasm. The enzyme catalyses glycyl-tRNA(Ala) + H2O = tRNA(Ala) + glycine + H(+). It catalyses the reaction a D-aminoacyl-tRNA + H2O = a tRNA + a D-alpha-amino acid + H(+). Functionally, an aminoacyl-tRNA editing enzyme that deacylates mischarged D-aminoacyl-tRNAs. Also deacylates mischarged glycyl-tRNA(Ala), protecting cells against glycine mischarging by AlaRS. Acts via tRNA-based rather than protein-based catalysis; rejects L-amino acids rather than detecting D-amino acids in the active site. By recycling D-aminoacyl-tRNA to D-amino acids and free tRNA molecules, this enzyme counteracts the toxicity associated with the formation of D-aminoacyl-tRNA entities in vivo and helps enforce protein L-homochirality. This Shigella dysenteriae serotype 1 (strain Sd197) protein is D-aminoacyl-tRNA deacylase.